A 142-amino-acid polypeptide reads, in one-letter code: Putative regulator of rDNA transcription protein 16 (142 aa).

3 consecutive transmembrane segments (helical) span residues 19–39 (ILLTVLFGIGWATLDLPVMVA), 84–104 (FLLFIGLNTSPCVSETIAIFL), and 111–131 (SIFIATEYLFLILLPLRGLCH).

Its subcellular location is the membrane. Identified in a screen for mutants with decreased levels of rDNA transcription. This chain is Putative regulator of rDNA transcription protein 16 (RRT16), found in Saccharomyces cerevisiae (strain ATCC 204508 / S288c) (Baker's yeast).